The primary structure comprises 432 residues: Adenylosuccinate synthetase (432 aa).

GTP contacts are provided by residues 13–19 and 41–43; these read GDEGKGK and GHT. The Proton acceptor role is filled by aspartate 14. 2 residues coordinate Mg(2+): aspartate 14 and glycine 41. IMP-binding positions include 14-17, 39-42, threonine 130, arginine 144, glutamine 225, threonine 240, and arginine 304; these read DEGK and NAGH. The Proton donor role is filled by histidine 42. Position 300 to 306 (300 to 306) interacts with substrate; that stretch reads ATTGRRR. Residues arginine 306, 332-334, and 415-417 each bind GTP; these read KLD and STG.

It belongs to the adenylosuccinate synthetase family. In terms of assembly, homodimer. Mg(2+) is required as a cofactor.

The protein localises to the cytoplasm. It carries out the reaction IMP + L-aspartate + GTP = N(6)-(1,2-dicarboxyethyl)-AMP + GDP + phosphate + 2 H(+). It functions in the pathway purine metabolism; AMP biosynthesis via de novo pathway; AMP from IMP: step 1/2. In terms of biological role, plays an important role in the de novo pathway of purine nucleotide biosynthesis. Catalyzes the first committed step in the biosynthesis of AMP from IMP. This is Adenylosuccinate synthetase from Serratia proteamaculans (strain 568).